We begin with the raw amino-acid sequence, 81 residues long: MRNEQRRGGQRRGKPNLLQRAGVVQVDWKDTDLLRRFISDRGKIRSRRVTGLTMQEQREVATAIKNAREMALLPYPAAAKR.

Belongs to the bacterial ribosomal protein bS18 family. As to quaternary structure, part of the 30S ribosomal subunit. Forms a tight heterodimer with protein bS6.

Functionally, binds as a heterodimer with protein bS6 to the central domain of the 16S rRNA, where it helps stabilize the platform of the 30S subunit. The sequence is that of Small ribosomal subunit protein bS18A from Saccharopolyspora erythraea (strain ATCC 11635 / DSM 40517 / JCM 4748 / NBRC 13426 / NCIMB 8594 / NRRL 2338).